The chain runs to 144 residues: Nucleoside diphosphate kinase (144 aa).

ATP contacts are provided by lysine 11, phenylalanine 59, arginine 87, threonine 93, arginine 104, and asparagine 114. Histidine 117 serves as the catalytic Pros-phosphohistidine intermediate.

It belongs to the NDK family. As to quaternary structure, homotetramer. Mg(2+) is required as a cofactor.

Its subcellular location is the cytoplasm. The catalysed reaction is a 2'-deoxyribonucleoside 5'-diphosphate + ATP = a 2'-deoxyribonucleoside 5'-triphosphate + ADP. The enzyme catalyses a ribonucleoside 5'-diphosphate + ATP = a ribonucleoside 5'-triphosphate + ADP. Major role in the synthesis of nucleoside triphosphates other than ATP. The ATP gamma phosphate is transferred to the NDP beta phosphate via a ping-pong mechanism, using a phosphorylated active-site intermediate. The polypeptide is Nucleoside diphosphate kinase (Sorangium cellulosum (strain So ce56) (Polyangium cellulosum (strain So ce56))).